The primary structure comprises 342 residues: Succinylglutamate desuccinylase (342 aa).

The Zn(2+) site is built by His-64, Glu-67, and His-159. The active site involves Glu-222.

Belongs to the AspA/AstE family. Succinylglutamate desuccinylase subfamily. It depends on Zn(2+) as a cofactor.

It carries out the reaction N-succinyl-L-glutamate + H2O = L-glutamate + succinate. It functions in the pathway amino-acid degradation; L-arginine degradation via AST pathway; L-glutamate and succinate from L-arginine: step 5/5. Functionally, transforms N(2)-succinylglutamate into succinate and glutamate. The chain is Succinylglutamate desuccinylase from Burkholderia orbicola (strain AU 1054).